Here is a 525-residue protein sequence, read N- to C-terminus: Ankyrin repeat and SOCS box protein 3 (525 aa).

ANK repeat units lie at residues 9–38 (DTCSTVGLAAREGNVKVLRKLLKKGRSIDV), 42–71 (RGWMPIHEASYHNSVECLRMLIRADSSENY), 78–107 (EGFCALHLAASQGHWKIIQILLEAGADPNA), 111–140 (EETTPLFLAVENGQIDVLRLLLRYGANVNG), 145–174 (CGWNALHQASFQGNAEIIKLLLKKGANKEC), 178–207 (FGITPLFVAAQYGKLESLSILISSGADVNC), 211–240 (DKATPLFIAAQEGHTECVELLLSSGADPDL), 246–275 (NWQLPIHAAAQMGHTKILDLLIPLTNRVCD), 279–308 (NKVSPVYSAVLGGHEECLEMLLQSGYSPDA), 315–346 (GFSSPLCMAFQKDCDFFGIVNILLKYGAQLNE), and 348–373 (HLAYCLKYERFSVFRYFLKKCCPSTP). Positions 441–505 (MLSARASNSS…HDYLLYAEVL (65 aa)) constitute an SOCS box domain.

It belongs to the ankyrin SOCS box (ASB) family. Interacts with ELOB and TNFRSF1B.

Its pathway is protein modification; protein ubiquitination. Its function is as follows. Probable substrate-recognition component of a SCF-like ECS (Elongin-Cullin-SOCS-box protein) E3 ubiquitin-protein ligase complex which mediates the ubiquitination and subsequent proteasomal degradation of target proteins. Recognizes TNFRSF1B. This Bos taurus (Bovine) protein is Ankyrin repeat and SOCS box protein 3 (ASB3).